Here is a 175-residue protein sequence, read N- to C-terminus: NADH-quinone oxidoreductase subunit I 2 (175 aa).

2 consecutive 4Fe-4S ferredoxin-type domains span residues 50–82 (HVLQ…IEAA) and 98–127 (KVYN…HGHG). [4Fe-4S] cluster contacts are provided by Cys-62, Cys-65, Cys-68, Cys-72, Cys-107, Cys-110, Cys-113, and Cys-117.

Belongs to the complex I 23 kDa subunit family. As to quaternary structure, NDH-1 is composed of 14 different subunits. Subunits NuoA, H, J, K, L, M, N constitute the membrane sector of the complex. [4Fe-4S] cluster serves as cofactor.

The protein localises to the cell inner membrane. It catalyses the reaction a quinone + NADH + 5 H(+)(in) = a quinol + NAD(+) + 4 H(+)(out). NDH-1 shuttles electrons from NADH, via FMN and iron-sulfur (Fe-S) centers, to quinones in the respiratory chain. The immediate electron acceptor for the enzyme in this species is believed to be ubiquinone. Couples the redox reaction to proton translocation (for every two electrons transferred, four hydrogen ions are translocated across the cytoplasmic membrane), and thus conserves the redox energy in a proton gradient. The polypeptide is NADH-quinone oxidoreductase subunit I 2 (Koribacter versatilis (strain Ellin345)).